Reading from the N-terminus, the 216-residue chain is 2,5-diamino-6-ribosylamino-4(3H)-pyrimidinone 5'-phosphate reductase (216 aa).

NADP(+)-binding positions include threonine 51, aspartate 55, 79 to 82 (SMAR), valine 126, and 148 to 151 (GSTL).

It belongs to the HTP reductase family. As to quaternary structure, homodimer.

It catalyses the reaction 2,5-diamino-6-(1-D-ribitylamino)pyrimidin-4(3H)-one 5'-phosphate + NADP(+) = 2,5-diamino-6-(1-D-ribosylamino)pyrimidin-4(3H)-one 5'-phosphate + NADPH + H(+). The catalysed reaction is 2,5-diamino-6-(1-D-ribitylamino)pyrimidin-4(3H)-one 5'-phosphate + NAD(+) = 2,5-diamino-6-(1-D-ribosylamino)pyrimidin-4(3H)-one 5'-phosphate + NADH + H(+). Its pathway is cofactor biosynthesis; riboflavin biosynthesis. Catalyzes an early step in riboflavin biosynthesis, the NADPH-dependent reduction of the ribose side chain of 2,5-diamino-6-ribosylamino-4(3H)-pyrimidinone 5'-phosphate, yielding 2,5-diamino-6-ribitylamino-4(3H)-pyrimidinone 5'-phosphate. This Methanothermobacter thermautotrophicus (strain ATCC 29096 / DSM 1053 / JCM 10044 / NBRC 100330 / Delta H) (Methanobacterium thermoautotrophicum) protein is 2,5-diamino-6-ribosylamino-4(3H)-pyrimidinone 5'-phosphate reductase.